The chain runs to 480 residues: tRNA-2-methylthio-N(6)-dimethylallyladenosine synthase (480 aa).

The region spanning 31–151 (RGLHVITWGC…LPEMVARAAR (121 aa)) is the MTTase N-terminal domain. Cys40, Cys76, Cys114, Cys192, Cys196, and Cys199 together coordinate [4Fe-4S] cluster. The region spanning 178–410 (SPGGITSFLT…QALLRTQQDA (233 aa)) is the Radical SAM core domain. A TRAM domain is found at 413–475 (DGTVGHVVPV…TNSLSGTLVQ (63 aa)).

This sequence belongs to the methylthiotransferase family. MiaB subfamily. In terms of assembly, monomer. It depends on [4Fe-4S] cluster as a cofactor.

It is found in the cytoplasm. The catalysed reaction is N(6)-dimethylallyladenosine(37) in tRNA + (sulfur carrier)-SH + AH2 + 2 S-adenosyl-L-methionine = 2-methylsulfanyl-N(6)-dimethylallyladenosine(37) in tRNA + (sulfur carrier)-H + 5'-deoxyadenosine + L-methionine + A + S-adenosyl-L-homocysteine + 2 H(+). Functionally, catalyzes the methylthiolation of N6-(dimethylallyl)adenosine (i(6)A), leading to the formation of 2-methylthio-N6-(dimethylallyl)adenosine (ms(2)i(6)A) at position 37 in tRNAs that read codons beginning with uridine. This chain is tRNA-2-methylthio-N(6)-dimethylallyladenosine synthase, found in Gluconacetobacter diazotrophicus (strain ATCC 49037 / DSM 5601 / CCUG 37298 / CIP 103539 / LMG 7603 / PAl5).